A 117-amino-acid chain; its full sequence is Venom protein TxLP11 (117 aa).

Positions 1–22 are cleaved as a signal peptide; it reads MNTKTLIVVFLVCLLVSEVVLA.

Post-translationally, contains 4 disulfide bonds. As to expression, expressed by the venom gland.

It is found in the secreted. The polypeptide is Venom protein TxLP11 (Lychas mucronatus (Chinese swimming scorpion)).